A 384-amino-acid chain; its full sequence is tRNA-specific 2-thiouridylase MnmA (384 aa).

ATP is bound by residues 9–16 (GMSGGVDS) and methionine 35. Residues 95–97 (NPD) form an interaction with target base in tRNA region. The active-site Nucleophile is the cysteine 100. A disulfide bridge links cysteine 100 with cysteine 196. Position 124 (glycine 124) interacts with ATP. An interaction with tRNA region spans residues 146-148 (KDQ). Cysteine 196 functions as the Cysteine persulfide intermediate in the catalytic mechanism. The segment at 308–309 (RY) is interaction with tRNA.

The protein belongs to the MnmA/TRMU family.

Its subcellular location is the cytoplasm. It catalyses the reaction S-sulfanyl-L-cysteinyl-[protein] + uridine(34) in tRNA + AH2 + ATP = 2-thiouridine(34) in tRNA + L-cysteinyl-[protein] + A + AMP + diphosphate + H(+). In terms of biological role, catalyzes the 2-thiolation of uridine at the wobble position (U34) of tRNA, leading to the formation of s(2)U34. The polypeptide is tRNA-specific 2-thiouridylase MnmA (Burkholderia ambifaria (strain ATCC BAA-244 / DSM 16087 / CCUG 44356 / LMG 19182 / AMMD) (Burkholderia cepacia (strain AMMD))).